We begin with the raw amino-acid sequence, 89 residues long: Small ribosomal subunit protein uS17 (89 aa).

The protein belongs to the universal ribosomal protein uS17 family. As to quaternary structure, part of the 30S ribosomal subunit.

One of the primary rRNA binding proteins, it binds specifically to the 5'-end of 16S ribosomal RNA. This chain is Small ribosomal subunit protein uS17, found in Ralstonia nicotianae (strain ATCC BAA-1114 / GMI1000) (Ralstonia solanacearum).